The chain runs to 3411 residues: Genome polyprotein (3411 aa).

At 1–104 (MSGRKAQGKT…LSSRKRRSHD (104 aa)) the chain is on the cytoplasmic side. The segment at 38–72 (PGPSRGVQGFIFFFLFNILTGKKITAHLKRLWKML) is hydrophobic; homodimerization of capsid protein C. The propeptide at 102–121 (SHDVLTVQFLILGMLLMTGG) is ER anchor for the capsid protein C, removed in mature form by serine protease NS3. Residues 105–125 (VLTVQFLILGMLLMTGGVTLV) traverse the membrane as a helical segment. The Extracellular segment spans residues 126–244 (RKNRWLLLNV…GERQLQKIER (119 aa)). N-linked (GlcNAc...) asparagine; by host glycans are attached at residues asparagine 134 and asparagine 150. A helical membrane pass occupies residues 245-265 (WFVRNPFFAVTALTIAYLVGS). The Cytoplasmic segment spans residues 266-270 (NMTQR). A helical transmembrane segment spans residues 271-285 (VVIALLVLAVGPAYS). Residues 286-730 (AHCIGITDRD…TVFGSAFQGL (445 aa)) lie on the Extracellular side of the membrane. Disulfide bonds link cysteine 288/cysteine 315, cysteine 345/cysteine 401, cysteine 345/cysteine 406, cysteine 359/cysteine 390, cysteine 377/cysteine 401, cysteine 377/cysteine 406, cysteine 467/cysteine 568, and cysteine 585/cysteine 615. The interval 383-396 (DRGWGNGCGLFGKG) is fusion peptide. Residues 731–751 (FGGLNWITKVIIGAVLIWVGI) form a helical membrane-spanning segment. The Extracellular portion of the chain corresponds to 752–757 (NTRNMT). A helical transmembrane segment spans residues 758–778 (MSMSMILVGVIMMFLSLGVGA). Over 779–1132 (DQGCAINFAK…LVRSWVTAGE (354 aa)) the chain is Extracellular. Cystine bridges form between cysteine 782/cysteine 793, cysteine 833/cysteine 921, cysteine 957/cysteine 1002, cysteine 1058/cysteine 1107, cysteine 1069/cysteine 1091, and cysteine 1090/cysteine 1094. Asparagine 908 and asparagine 986 each carry an N-linked (GlcNAc...) asparagine; by host glycan. A helical membrane pass occupies residues 1133-1153 (IHAVPFGLVSMMIALEVVLRK). The Cytoplasmic portion of the chain corresponds to 1154–1201 (RQGPKQMLVGGVVLLGAMLVGQVTLLDLLKLTVAVGLHFHEMNNGGDA). Residues 1202–1222 (MYMALIAAFSVRPGLLIGFGL) traverse the membrane as a helical segment. At 1223–1287 (RTLWSPRERL…ILPLMALLTP (65 aa)) the chain is on the lumenal side. The chain crosses the membrane as a helical span at residues 1288-1308 (VTMAEVRLATMLFCTVVIIGV). The Cytoplasmic segment spans residues 1309–1355 (LYQNSKDTSMQKTIPLVALTLTSYLGLTQPFLGLCAFLATRIFGRRS). The helical transmembrane segment at 1356–1376 (IPVNEALAAAGLVGVLAGLAF) threads the bilayer. Residues 1377–1378 (QE) are Lumenal-facing. The helical transmembrane segment at 1379-1399 (MENFLGPIAVGGILMMLVSVA) threads the bilayer. Residues 1400–1456 (GRVDGLELKKLGEVAWEEEAEISGSSARYDVALSEQGEFKLLSEEKVPWDQVVMTSL) are Cytoplasmic-facing. Positions 1407–1446 (LKKLGEVAWEEEAEISGSSARYDVALSEQGEFKLLSEEKV) are interacts with and activates NS3 protease. The helical intramembrane region spans 1457–1477 (ALVGAAIHPFALLLVLAGWLF). The Cytoplasmic segment spans residues 1478–2157 (HVRGARRSGD…RNALSMMPEA (680 aa)). In terms of domain architecture, Peptidase S7 spans 1485-1665 (SGDVLWDIPT…EVKEEGKEEL (181 aa)). Active-site charge relay system; for serine protease NS3 activity residues include histidine 1537, aspartate 1561, and serine 1622. A Helicase ATP-binding domain is found at 1669 to 1825 (PTMLKKGKTT…HSNGEIEDVQ (157 aa)). The tract at residues 1673–1676 (KKGK) is important for RNA-binding. Position 1682 to 1689 (1682 to 1689 (FHPGAGKT)) interacts with ATP. The short motif at 1773–1776 (DEAH) is the DEAH box element. One can recognise a Helicase C-terminal domain in the interval 1820–1997 (EIEDVQTDIP…VRGGMVAPLY (178 aa)). Lysine 1877 bears the N6-acetyllysine; by host mark. A disordered region spans residues 1942–1961 (AAQRRGRIGRNPNRDGDSYY). Residues 2158-2178 (MTIVMLFILAGLLTSGMVIFF) form a helical membrane-spanning segment. Residues 2179-2186 (MSPKGISR) are Lumenal-facing. Positions 2187-2207 (MSMAMGTMAGCGYLMFLGGVK) form an intramembrane region, helical. The Lumenal segment spans residues 2208–2209 (PT). Residues 2210–2230 (HISYIMLIFFVLMVVVIPEPG) traverse the membrane as a helical segment. The Cytoplasmic portion of the chain corresponds to 2231–2241 (QQRSIQDNQVA). Residues 2242-2262 (FLIIGILTLVSVVAANELGML) form a helical membrane-spanning segment. Residues 2263–2293 (EKTKEDLFGKKNSIPSSASPWSWPDLDLKPG) lie on the Lumenal side of the membrane. Residues 2294–2314 (AAWTVYVGIVTMLSPMLHHWI) constitute an intramembrane region (helical). Residues 2315-2360 (KVEYGNLSLSGIAQSASVLSFMDKGIPFMKMNISVIMLLISGWNSI) lie on the Lumenal side of the membrane. Residues 2361-2380 (TVMPLLCGIGCAMLHWSLIL) traverse the membrane as a helical segment. The Cytoplasmic segment spans residues 2381–2421 (PGIKAQQSKLAQRRVFHGVAKNPVVDGNPTVDIEEAPEMPV). The helical transmembrane segment at 2422–2442 (LYEKKLALYLLLALSLASVAM) threads the bilayer. At 2443 to 2445 (CRT) the chain is on the lumenal side. A helical membrane pass occupies residues 2446 to 2466 (PFSLAEGIVLASAALGPLIEG). At 2467-3411 (NTSLLWNGPM…DADLQPGELI (945 aa)) the chain is on the cytoplasmic side. The region spanning 2507 to 2771 (GTANGKTLGE…DVTLPIGTRS (265 aa)) is the mRNA cap 0-1 NS5-type MT domain. Serine 2562 serves as a coordination point for S-adenosyl-L-methionine. A Phosphoserine modification is found at serine 2562. Lysine 2567 (for 2'-O-MTase activity) is an active-site residue. The S-adenosyl-L-methionine site is built by glycine 2592, tryptophan 2593, threonine 2610, leucine 2611, aspartate 2637, and isoleucine 2638. Residue aspartate 2652 is the For 2'-O-MTase activity of the active site. Isoleucine 2653 is an S-adenosyl-L-methionine binding site. Active-site for 2'-O-MTase activity residues include lysine 2688 and glutamate 2724. Tyrosine 2726 serves as a coordination point for S-adenosyl-L-methionine. The short motif at 2878 to 2911 (RKIMKVVNRWLFRHLAREKNPRLCTKEEFIAKVR) is the Nuclear localization signal element. The Zn(2+) site is built by glutamate 2945, histidine 2949, cysteine 2954, and cysteine 2957. Residues 3035 to 3187 (GGFYADDTAG…RPIDDRFGLA (153 aa)) form the RdRp catalytic domain. Zn(2+) contacts are provided by histidine 3222, cysteine 3238, and cysteine 3357.

It in the N-terminal section; belongs to the class I-like SAM-binding methyltransferase superfamily. mRNA cap 0-1 NS5-type methyltransferase family. As to quaternary structure, homodimer. Interacts (via N-terminus) with host EXOC1 (via C-terminus); this interaction results in EXOC1 degradation through the proteasome degradation pathway. In terms of assembly, forms heterodimers with envelope protein E in the endoplasmic reticulum and Golgi. Homodimer; in the endoplasmic reticulum and Golgi. Interacts with protein prM. Interacts with non-structural protein 1. As to quaternary structure, homodimer; Homohexamer when secreted. Interacts with envelope protein E. In terms of assembly, interacts (via N-terminus) with serine protease NS3. Forms a heterodimer with serine protease NS3. May form homooligomers. As to quaternary structure, forms a heterodimer with NS2B. Interacts with non-structural protein 2A (via N-terminus). Interacts with NS4B. Interacts with unphosphorylated RNA-directed RNA polymerase NS5; this interaction stimulates RNA-directed RNA polymerase NS5 guanylyltransferase activity. NS3 interacts with host PDCD6IP; this interaction contributes to virion release. In terms of assembly, interacts with serine protease NS3. Homodimer. Interacts with host STAT2; this interaction prevents the establishment of cellular antiviral state. Interacts with serine protease NS3. Interacts with host TRIM23; this interaction leads to NS5 ubiquitination. Post-translationally, specific enzymatic cleavages in vivo yield mature proteins. The nascent capsid protein C contains a C-terminal hydrophobic domain that act as a signal sequence for translocation of prM into the lumen of the ER. Mature capsid protein C is cleaved at a site upstream of this hydrophobic domain by NS3. prM is cleaved in post-Golgi vesicles by a host furin, releasing the mature small envelope protein M, and peptide pr. Non-structural protein 2A-alpha, a C-terminally truncated form of non-structural protein 2A, results from partial cleavage by NS3. Specific enzymatic cleavages in vivo yield mature proteins peptide 2K acts as a signal sequence and is removed from the N-terminus of NS4B by the host signal peptidase in the ER lumen. Signal cleavage at the 2K-4B site requires a prior NS3 protease-mediated cleavage at the 4A-2K site. Cleaved in post-Golgi vesicles by a host furin, releasing the mature small envelope protein M, and peptide pr. This cleavage is incomplete as up to 30% of viral particles still carry uncleaved prM. In terms of processing, N-glycosylated. Post-translationally, N-glycosylated. The excreted form is glycosylated and this is required for efficient secretion of the protein from infected cells. Polyubiquitinated; ubiquitination is probably mediated by host TRIM23 and is prerequisite for NS5-STAT2 interaction. NS5 is not ISGylated or sumoylated. In terms of processing, phosphorylated on serines residues. This phosphorylation may trigger NS5 nuclear localization. Post-translationally, acetylated by host KAT5. Acetylation modulates NS3 RNA-binding and -unwinding activities and plays an important role for viral replication.

The protein localises to the virion. It is found in the host nucleus. Its subcellular location is the host cytoplasm. The protein resides in the host perinuclear region. It localises to the secreted. The protein localises to the virion membrane. It is found in the host endoplasmic reticulum membrane. It carries out the reaction Selective hydrolysis of -Xaa-Xaa-|-Yaa- bonds in which each of the Xaa can be either Arg or Lys and Yaa can be either Ser or Ala.. The enzyme catalyses RNA(n) + a ribonucleoside 5'-triphosphate = RNA(n+1) + diphosphate. It catalyses the reaction a ribonucleoside 5'-triphosphate + H2O = a ribonucleoside 5'-diphosphate + phosphate + H(+). The catalysed reaction is ATP + H2O = ADP + phosphate + H(+). It carries out the reaction a 5'-end (5'-triphosphoguanosine)-ribonucleoside in mRNA + S-adenosyl-L-methionine = a 5'-end (N(7)-methyl 5'-triphosphoguanosine)-ribonucleoside in mRNA + S-adenosyl-L-homocysteine. The enzyme catalyses a 5'-end (N(7)-methyl 5'-triphosphoguanosine)-ribonucleoside in mRNA + S-adenosyl-L-methionine = a 5'-end (N(7)-methyl 5'-triphosphoguanosine)-(2'-O-methyl-ribonucleoside) in mRNA + S-adenosyl-L-homocysteine + H(+). Plays a role in virus budding by binding to the cell membrane and gathering the viral RNA into a nucleocapsid that forms the core of a mature virus particle. During virus entry, may induce genome penetration into the host cytoplasm after hemifusion induced by the surface proteins. Can migrate to the cell nucleus where it modulates host functions. Its function is as follows. Inhibits RNA silencing by interfering with host Dicer. Functionally, prevents premature fusion activity of envelope proteins in trans-Golgi by binding to envelope protein E at pH6.0. After virion release in extracellular space, gets dissociated from E dimers. In terms of biological role, acts as a chaperone for envelope protein E during intracellular virion assembly by masking and inactivating envelope protein E fusion peptide. prM is the only viral peptide matured by host furin in the trans-Golgi network probably to avoid catastrophic activation of the viral fusion activity in acidic Golgi compartment prior to virion release. prM-E cleavage is inefficient, and many virions are only partially matured. These uncleaved prM would play a role in immune evasion. May play a role in virus budding. Exerts cytotoxic effects by activating a mitochondrial apoptotic pathway through M ectodomain. May display a viroporin activity. Its function is as follows. Binds to host cell surface receptor and mediates fusion between viral and cellular membranes. Envelope protein is synthesized in the endoplasmic reticulum in the form of heterodimer with protein prM. They play a role in virion budding in the ER, and the newly formed immature particle is covered with 60 spikes composed of heterodimer between precursor prM and envelope protein E. The virion is transported to the Golgi apparatus where the low pH causes dissociation of PrM-E heterodimers and formation of E homodimers. prM-E cleavage is inefficient, and many virions are only partially matured. These uncleaved prM would play a role in immune evasion. Functionally, involved in immune evasion, pathogenesis and viral replication. Once cleaved off the polyprotein, is targeted to three destinations: the viral replication cycle, the plasma membrane and the extracellular compartment. Essential for viral replication. Required for formation of the replication complex and recruitment of other non-structural proteins to the ER-derived membrane structures. Excreted as a hexameric lipoparticle that plays a role against host immune response. Antagonizing the complement function. Binds to the host macrophages and dendritic cells. Inhibits signal transduction originating from Toll-like receptor 3 (TLR3). In terms of biological role, component of the viral RNA replication complex that functions in virion assembly and antagonizes the host immune response. Required cofactor for the serine protease function of NS3. May have membrane-destabilizing activity and form viroporins. Its function is as follows. Displays three enzymatic activities: serine protease, NTPase and RNA helicase. NS3 serine protease, in association with NS2B, performs its autocleavage and cleaves the polyprotein at dibasic sites in the cytoplasm: C-prM, NS2A-NS2B, NS2B-NS3, NS3-NS4A, NS4A-2K and NS4B-NS5. NS3 RNA helicase binds RNA and unwinds dsRNA in the 3' to 5' direction. Also plays a role in virus assembly. Functionally, regulates the ATPase activity of the NS3 helicase activity. NS4A allows NS3 helicase to conserve energy during unwinding. In terms of biological role, functions as a signal peptide for NS4B and is required for the interferon antagonism activity of the latter. Induces the formation of ER-derived membrane vesicles where the viral replication takes place. Inhibits interferon (IFN)-induced host STAT1 phosphorylation and nuclear translocation, thereby preventing the establishment of cellular antiviral state by blocking the IFN-alpha/beta pathway. Its function is as follows. Replicates the viral (+) and (-) RNA genome, and performs the capping of genomes in the cytoplasm. NS5 methylates viral RNA cap at guanine N-7 and ribose 2'-O positions. Besides its role in RNA genome replication, also prevents the establishment of cellular antiviral state by blocking the interferon-alpha/beta (IFN-alpha/beta) signaling pathway. IFN-I induces binding of NS5 to host IFN-activated transcription factor STAT2, preventing its transcriptional activity. Host TRIM23 is the E3 ligase that interacts with and polyubiquitinates NS5 to promote its binding to STAT2 and trigger IFN-I signaling inhibition. The sequence is that of Genome polyprotein from Yellow fever virus (strain French neurotropic vaccine FNV) (YFV).